The sequence spans 182 residues: Adenylate kinase (182 aa).

Position 12–17 (12–17) interacts with ATP; the sequence is GAGKGT. The segment at 32–61 is NMP; the sequence is STGDLLRAEVGAKTPLGQEAAAVMNRGELV. AMP contacts are provided by residues T33, R38, 59–61, 85–88, and Q92; these read ELV and GFPR. The tract at residues 126–132 is LID; it reads SRGRSDD. R127 lines the ATP pocket. Residues R129 and R140 each contribute to the AMP site. G168 is an ATP binding site.

The protein belongs to the adenylate kinase family. In terms of assembly, monomer.

The protein resides in the cytoplasm. It carries out the reaction AMP + ATP = 2 ADP. The protein operates within purine metabolism; AMP biosynthesis via salvage pathway; AMP from ADP: step 1/1. In terms of biological role, catalyzes the reversible transfer of the terminal phosphate group between ATP and AMP. Plays an important role in cellular energy homeostasis and in adenine nucleotide metabolism. This is Adenylate kinase from Prochlorococcus marinus (strain MIT 9303).